A 396-amino-acid polypeptide reads, in one-letter code: Putative arsenical pump-driving ATPase 1 (396 aa).

Position 8–15 (8–15 (GKGGVGKT)) interacts with ATP.

It belongs to the arsA ATPase family.

The catalysed reaction is arsenite(in) + ATP + H2O = arsenite(out) + ADP + phosphate + H(+). Its function is as follows. Anion-transporting ATPase. Catalyzes the extrusion of arsenite. The protein is Putative arsenical pump-driving ATPase 1 (arsA1) of Aquifex aeolicus (strain VF5).